Here is a 1415-residue protein sequence, read N- to C-terminus: Non-structural polyprotein 1AB (1415 aa).

Positions 104–142 (KLIHKANALQERLRLSQEEKATLALDVQFLQHENVRLKE) form a coiled coil. A run of 5 helical transmembrane segments spans residues 154 to 174 (MKWIIVGAVLTFLSLIPGGYA), 239 to 259 (VFYYIHYYEMWNIFMFVLAIG), 286 to 306 (VLPTIPFHTTMTLWVMNTLMV), 313 to 333 (LLAITLAILAPILGIIFLCFM), and 344 to 364 (GLIATAVLIAGGHACLTLTGT). Catalysis depends on charge relay system; for serine protease activity residues histidine 461, aspartate 489, and serine 551. A coiled-coil region spans residues 587 to 616 (VKAPSRVELLKEEIERLKAQLNSAAENPAT). Tyrosine 693 is subject to O-(5'-phospho-RNA)-tyrosine. The segment at 753 to 813 (FDQAKPTPAP…KNEPQPYSQT (61 aa)) is disordered. A compositionally biased stretch (basic and acidic residues) spans 783–795 (SQKKEKQLEHEQQ). Positions 800–813 (TKPQKNEPQPYSQT) are enriched in polar residues. Residues 1160-1286 (KHFIEFDWTR…TTPSVPDDYE (127 aa)) enclose the RdRp catalytic domain.

It belongs to the astroviridae polyprotein 1AB family. As to quaternary structure, monomer. In terms of processing, cleaved by the viral and host proteases. The protease is probably autocatalytically cleaved.

It is found in the host membrane. The catalysed reaction is RNA(n) + a ribonucleoside 5'-triphosphate = RNA(n+1) + diphosphate. Functionally, responsible for the cleavage of the polyprotein into functional products. Covalently attached to the 5' extremity of the genomic and subgenomic RNAs. It may serve as a primer for the replicase. This chain is Non-structural polyprotein 1AB (ORF1), found in Human astrovirus-4 (HAstV-4).